A 919-amino-acid polypeptide reads, in one-letter code: uncharacterized protein (919 aa).

The span at 1-15 (MEALILLSSQQSGSI) shows a compositional bias: low complexity. Disordered regions lie at residues 1-167 (MEAL…DLEN), 179-312 (RFKP…STPS), 415-491 (HIYE…RLSL), 553-739 (QQQQ…TIKP), 751-863 (THNE…NNII), and 883-906 (LNINHQDGPNSASSTPRLPTDHIN). A compositionally biased stretch (polar residues) spans 16–25 (KNNCASTSDI). Low complexity-rich tracts occupy residues 34 to 75 (IVIV…SSSS), 96 to 107 (SSPSSSPNTPKT), and 141 to 153 (TPTTTSTSTTPIK). A compositionally biased stretch (basic and acidic residues) spans 154 to 167 (PVKDPKEKEKDLEN). Residues 186-292 (NNTNNNNNIN…QQSSPTSSQT (107 aa)) show a composition bias toward low complexity. Polar residues predominate over residues 420-433 (PNENNNGGSFQKPN). Low complexity-rich tracts occupy residues 450–471 (GVSGSPSHSPRVSQSPRVPSHP), 553–564 (QQQQQQQQQSSS), 573–589 (SQPQNSSSPRQPSQTPQ), and 618–635 (HMPQSPHMPHSPHLMPHS). The segment covering 678–695 (YGSSPNLNGGKGSNNFLQ) has biased composition (polar residues). Residues 712–723 (SSVDSYSNSSPT) are compositionally biased toward low complexity. The span at 754–768 (ENYMSSPRQPLSPHN) shows a compositional bias: polar residues. A compositionally biased stretch (basic and acidic residues) spans 785 to 797 (PHEHCNYIDKNDE). Positions 798–863 (YYSNNNNNNN…NNNNNNNNII (66 aa)) are enriched in low complexity. Residues 883-899 (LNINHQDGPNSASSTPR) are compositionally biased toward polar residues.

This is an uncharacterized protein from Dictyostelium discoideum (Social amoeba).